A 179-amino-acid polypeptide reads, in one-letter code: MEQFHATTIVCVRRGNHVALGGDGQVTLGNIVIKGTVRKIRRLYHDKVLAGFAGATADAFTLQERFEAKLEKHQGHLMRAAVELTRDWRTDRVLRRLEAMLIVADTEHTLVLTGNGDVLEPEHGLAAIGSGGAYAQSAALALLRNTELPPEAIVKQSLEIAGDLCIYTNQNHVIETLGA.

Threonine 7 is a catalytic residue. Na(+) is bound by residues glycine 162, cysteine 165, and threonine 168.

The protein belongs to the peptidase T1B family. HslV subfamily. A double ring-shaped homohexamer of HslV is capped on each side by a ring-shaped HslU homohexamer. The assembly of the HslU/HslV complex is dependent on binding of ATP.

The protein localises to the cytoplasm. The catalysed reaction is ATP-dependent cleavage of peptide bonds with broad specificity.. Its activity is regulated as follows. Allosterically activated by HslU binding. Protease subunit of a proteasome-like degradation complex believed to be a general protein degrading machinery. This chain is ATP-dependent protease subunit HslV, found in Bordetella pertussis (strain Tohama I / ATCC BAA-589 / NCTC 13251).